Reading from the N-terminus, the 426-residue chain is UPF0597 protein CLD_2825 (426 aa).

The protein belongs to the UPF0597 family.

The sequence is that of UPF0597 protein CLD_2825 from Clostridium botulinum (strain Okra / Type B1).